A 220-amino-acid chain; its full sequence is Glutamine amidotransferase-like class 1 domain-containing protein 1 (220 aa).

An N-terminal signal peptide occupies residues 1-35; that stretch reads MASERLPSRPACLLVASGAAEGVSAQSFLHCFTLA. N-linked (GlcNAc...) asparagine glycans are attached at residues Asn-57 and Asn-201.

It belongs to the peptidase C56 family. As to quaternary structure, homotetramer. Component of the FERRY complex composed of five subunits, TBCK, PPP1R21, FERRY3, CRYZL1 and GATD1 with a ratio of 1:2:1:2:4, respectively.

The protein localises to the secreted. The protein resides in the early endosome. Functionally, component of the FERRY complex (Five-subunit Endosomal Rab5 and RNA/ribosome intermediary). The FERRY complex directly interacts with mRNAs and RAB5A, and functions as a RAB5A effector involved in the localization and the distribution of specific mRNAs most likely by mediating their endosomal transport. The complex recruits mRNAs and ribosomes to early endosomes through direct mRNA-interaction. This Bos taurus (Bovine) protein is Glutamine amidotransferase-like class 1 domain-containing protein 1.